The sequence spans 338 residues: Aspartate-semialdehyde dehydrogenase (338 aa).

Residues 13-16 and 41-42 contribute to the NADP(+) site; these read TGNV and SS. Arginine 101 provides a ligand contact to phosphate. Cysteine 132 serves as the catalytic Acyl-thioester intermediate. Position 159 (glutamine 159) interacts with substrate. NADP(+)-binding positions include 162 to 163 and proline 187; that span reads SG. Lysine 216 is a binding site for phosphate. Residue arginine 237 participates in substrate binding. The active-site Proton acceptor is the histidine 244. NADP(+) is bound at residue asparagine 317.

Belongs to the aspartate-semialdehyde dehydrogenase family. Homodimer.

It carries out the reaction L-aspartate 4-semialdehyde + phosphate + NADP(+) = 4-phospho-L-aspartate + NADPH + H(+). The protein operates within amino-acid biosynthesis; L-lysine biosynthesis via DAP pathway; (S)-tetrahydrodipicolinate from L-aspartate: step 2/4. Its pathway is amino-acid biosynthesis; L-methionine biosynthesis via de novo pathway; L-homoserine from L-aspartate: step 2/3. It functions in the pathway amino-acid biosynthesis; L-threonine biosynthesis; L-threonine from L-aspartate: step 2/5. Catalyzes the NADPH-dependent formation of L-aspartate-semialdehyde (L-ASA) by the reductive dephosphorylation of L-aspartyl-4-phosphate. This chain is Aspartate-semialdehyde dehydrogenase, found in Rickettsia conorii (strain ATCC VR-613 / Malish 7).